We begin with the raw amino-acid sequence, 136 residues long: MTQASSQRAVYWGTGRRKTAVARVRLVPGTGKIIINDRPGDQYLQYQEALLASVKGPLEILGLENSYDILVRAHGGGVHGQADAIKLGVARALCEVDPANRGPLKVEGYLKRDPRAVERKKYGLRKARKAPQYSKR.

Belongs to the universal ribosomal protein uS9 family.

The polypeptide is Small ribosomal subunit protein uS9 (Synechococcus sp. (strain JA-2-3B'a(2-13)) (Cyanobacteria bacterium Yellowstone B-Prime)).